A 628-amino-acid polypeptide reads, in one-letter code: Probable potassium transport system protein Kup (628 aa).

The next 11 helical transmembrane spans lie at Ile-56–Ile-76, Leu-109–Ile-129, Ala-141–Phe-161, Phe-174–Ile-194, Ala-209–Leu-229, Trp-253–Leu-273, Leu-295–Phe-315, Ile-343–Phe-363, Ala-372–Ile-392, Trp-400–Ala-420, and Ile-425–Thr-445.

The protein belongs to the HAK/KUP transporter (TC 2.A.72) family.

Its subcellular location is the cell inner membrane. It catalyses the reaction K(+)(in) + H(+)(in) = K(+)(out) + H(+)(out). Functionally, transport of potassium into the cell. Likely operates as a K(+):H(+) symporter. The protein is Probable potassium transport system protein Kup of Methylibium petroleiphilum (strain ATCC BAA-1232 / LMG 22953 / PM1).